The chain runs to 315 residues: Olfactory receptor 5A1 (315 aa).

The Extracellular segment spans residues 1 to 28 (MSITKAWNSSSVTMFILLGFTDHPELQA). Residue Asn8 is glycosylated (N-linked (GlcNAc...) asparagine). A helical membrane pass occupies residues 29 to 52 (LLFVTFLGIYLTTLAWNLALIFLI). Residues 53–60 (RGDTHLHT) lie on the Cytoplasmic side of the membrane. Residues 61–82 (PMYFFLSNLSFIDICYSSAVAP) form a helical membrane-spanning segment. Residues 83–103 (NMLTDFFWEQKTISFVGCAAQ) lie on the Extracellular side of the membrane. A disulfide bridge links Cys100 with Cys192. The chain crosses the membrane as a helical span at residues 104-123 (FFFFVGMGLSECLLLTAMAY). At 124-142 (DRYAAISSPLLYPTIMTQG) the chain is on the cytoplasmic side. Residues 143–161 (LCTRMVVGAYVGGFLSSLI) traverse the membrane as a helical segment. The Extracellular portion of the chain corresponds to 162–198 (QASSIFRLHFCGPNIINHFFCDLPPVLALSCSDTFLS). A helical membrane pass occupies residues 199–222 (QVVNFLVVVTVGGTSFLQLLISYG). At 223-239 (YIVSAVLKIPSAEGRWK) the chain is on the cytoplasmic side. Residues 240 to 262 (ACNTCASHLMVVTLLFGTALFVY) traverse the membrane as a helical segment. The Extracellular segment spans residues 263–275 (LRPSSSYLLGRDK). The chain crosses the membrane as a helical span at residues 276–295 (VVSVFYSLVIPMLNPLIYSL). Topologically, residues 296–315 (RNKEIKDALWKVLERKKVFS) are cytoplasmic.

The protein belongs to the G-protein coupled receptor 1 family.

The protein resides in the cell membrane. Its function is as follows. Odorant receptor. This chain is Olfactory receptor 5A1 (OR5A1), found in Homo sapiens (Human).